Reading from the N-terminus, the 66-residue chain is Large ribosomal subunit protein bL28 (66 aa).

The interval 1-26 is disordered; sequence MAKDAITGARTRFGNQRSHALNSSRR. Residues 13-25 are compositionally biased toward polar residues; the sequence is FGNQRSHALNSSR.

Belongs to the bacterial ribosomal protein bL28 family.

In Leuconostoc citreum (strain KM20), this protein is Large ribosomal subunit protein bL28.